Consider the following 172-residue polypeptide: MGRGRSSSSSSIESSCKSNPFGVSSSNTRNLSTDLRLGLSFGSSSGQYYNGGDNHEYDGVGAAEEMMIMEEEEQNECNSVGSFYVKVNMEGVPIGRKIDLLSLNGYHDLITTLDYMFNASILWAEEEDMCSEKSHVLTYADKEGDWMMVGDVPWEMFLSSVRRLKISRAYHY.

Low complexity predominate over residues 1-18 (MGRGRSSSSSSIESSCKS). The disordered stretch occupies residues 1–28 (MGRGRSSSSSSIESSCKSNPFGVSSSNT). The short motif at 35-39 (LRLGL) is the EAR-like (transcriptional repression) element. Positions 82-171 (SFYVKVNMEG…RRLKISRAYH (90 aa)) constitute a PB1 domain.

The protein belongs to the Aux/IAA family. Homodimers and heterodimers.

It localises to the nucleus. Aux/IAA proteins are short-lived transcriptional factors that function as repressors of early auxin response genes at low auxin concentrations. Repression is thought to result from the interaction with auxin response factors (ARFs), proteins that bind to the auxin-responsive promoter element (AuxRE). Formation of heterodimers with ARF proteins may alter their ability to modulate early auxin response genes expression. The sequence is that of Auxin-responsive protein IAA30 (IAA30) from Arabidopsis thaliana (Mouse-ear cress).